A 155-amino-acid chain; its full sequence is Ribosomal RNA large subunit methyltransferase H (155 aa).

S-adenosyl-L-methionine is bound by residues leucine 72, glycine 103, and phenylalanine 122–tryptophan 127.

Belongs to the RNA methyltransferase RlmH family. Homodimer.

The protein resides in the cytoplasm. It carries out the reaction pseudouridine(1915) in 23S rRNA + S-adenosyl-L-methionine = N(3)-methylpseudouridine(1915) in 23S rRNA + S-adenosyl-L-homocysteine + H(+). Specifically methylates the pseudouridine at position 1915 (m3Psi1915) in 23S rRNA. This Paracoccus denitrificans (strain Pd 1222) protein is Ribosomal RNA large subunit methyltransferase H.